The primary structure comprises 156 residues: Small ribosomal subunit protein uS7 (156 aa).

It belongs to the universal ribosomal protein uS7 family. In terms of assembly, part of the 30S ribosomal subunit. Contacts proteins S9 and S11.

Functionally, one of the primary rRNA binding proteins, it binds directly to 16S rRNA where it nucleates assembly of the head domain of the 30S subunit. Is located at the subunit interface close to the decoding center, probably blocks exit of the E-site tRNA. The chain is Small ribosomal subunit protein uS7 from Synechococcus sp. (strain RCC307).